We begin with the raw amino-acid sequence, 444 residues long: Glutamate--methylamine ligase (444 aa).

One can recognise a GS beta-grasp domain in the interval 14–97 (HHVKYVLAQF…LVCDGHVNGK (84 aa)). Positions 103–444 (TRVVLKQQIA…WEINRYVQFY (342 aa)) constitute a GS catalytic domain.

This sequence belongs to the glutamine synthetase family. Type 3 subfamily. Requires Mg(2+) as cofactor.

It catalyses the reaction methylamine + L-glutamate + ATP = N(5)-methyl-L-glutamine + ADP + phosphate + H(+). The catalysed reaction is ethylamine + L-glutamate + ATP = N(5)-ethyl-L-glutamine + ADP + phosphate + H(+). Formation of theanine is repressed by a high concentration of glutamic acid. In terms of biological role, catalyzes the formation of N(5)-methyl-L-glutamine from glutamate and methylamine. In vitro, can also use ethylamine, hydroxylamine and ammonia, with 75%, 40% and 1% activity compared to methylamine, respectively. The polypeptide is Glutamate--methylamine ligase (Methylovorus mays).